The primary structure comprises 467 residues: Glutamate--tRNA ligase (467 aa).

Positions 9-19 (PSPTGFLHIGG) match the 'HIGH' region motif. The short motif at 250 to 254 (KLSKR) is the 'KMSKS' region element. K253 serves as a coordination point for ATP.

This sequence belongs to the class-I aminoacyl-tRNA synthetase family. Glutamate--tRNA ligase type 1 subfamily. In terms of assembly, monomer.

It is found in the cytoplasm. The catalysed reaction is tRNA(Glu) + L-glutamate + ATP = L-glutamyl-tRNA(Glu) + AMP + diphosphate. In terms of biological role, catalyzes the attachment of glutamate to tRNA(Glu) in a two-step reaction: glutamate is first activated by ATP to form Glu-AMP and then transferred to the acceptor end of tRNA(Glu). This Mesomycoplasma hyopneumoniae (strain 7448) (Mycoplasma hyopneumoniae) protein is Glutamate--tRNA ligase.